The sequence spans 523 residues: Calcium-dependent protein kinase 28 (523 aa).

Gly-2 is lipidated: N-myristoyl glycine. Cys-4 carries the S-palmitoyl cysteine lipid modification. A disordered region spans residues 15 to 43; that stretch reads SSRRSSQTKSKAAPTPIDTKASTKRRTGS. The 261-residue stretch at 62 to 322 folds into the Protein kinase domain; sequence YTIGKLLGHG…AAQALSHAWV (261 aa). Residues 68–76 and Lys-91 each bind ATP; that span reads LGHGQFGYT. The active-site Proton acceptor is the Asp-188. Phosphoserine is present on residues Ser-228 and Ser-318. An autoinhibitory domain region spans residues 328–358; it reads ATDIPVDISVLNNLRQFVRYSRLKQFALRAL. EF-hand domains are found at residues 365–400, 402–437, 444–479, and 482–509; these read AEISDLRDQFDAIDVDKNGVISLEEMRQALAKDLPW, LKDSRVAEILEAIDSNTDGLVDFTEFVAAALHVHQL, KWQLRSRAAFEKFDLDKDGYITPEELRMHTGLRGSI, and LLDEADIDRDGKISLHEFRRLLRTASIS. Ca(2+) contacts are provided by Asp-378, Asp-380, Asn-382, Glu-389, Asp-415, Asn-417, Asp-419, Glu-426, Asp-457, Asp-459, Asp-461, Tyr-463, Glu-468, Asp-487, Asp-489, Asp-491, and Lys-493. Residue Ser-495 is modified to Phosphoserine. Residue Glu-498 participates in Ca(2+) binding. Ser-515 is modified (phosphoserine).

This sequence belongs to the protein kinase superfamily. Ser/Thr protein kinase family. CDPK subfamily. As to quaternary structure, interacts with BIK1. As to expression, expressed in vascular and meristematic tissues throughout plant development.

It localises to the cell membrane. The catalysed reaction is L-seryl-[protein] + ATP = O-phospho-L-seryl-[protein] + ADP + H(+). It catalyses the reaction L-threonyl-[protein] + ATP = O-phospho-L-threonyl-[protein] + ADP + H(+). Its activity is regulated as follows. Activated by calcium. Autophosphorylation plays an important role in the regulation of the kinase activity. Its function is as follows. May play a role in signal transduction pathways that involve calcium as a second messenger. Acts as a developmentally controlled regulator for coordinated stem elongation and vascular development. Acts as a key component which contributes to the developmental switch that establishes the transition from vegetative to reproductive growth. Involved in pathogen-associated molecular pattern (PAMP)-triggered immunity (PTI) signaling. Interacts with and phosphorylates the kinase BIK1, a central rate-limiting kinase in PTI signaling. Facilitates BIK1 turnover and negatively regulates BIK1-mediated immune responses triggered by several PAMPs. Its kinase activity is necessary and sufficient for its function in PTI signaling. This Arabidopsis thaliana (Mouse-ear cress) protein is Calcium-dependent protein kinase 28.